A 779-amino-acid polypeptide reads, in one-letter code: Glutathione biosynthesis bifunctional protein GshAB (779 aa).

A glutamate--cysteine ligase region spans residues 1-346; sequence MAFSKNILDS…ETANRNQEQA (346 aa). Positions 512–768 constitute an ATP-grasp domain; that stretch reads KKILDQAGIN…LDDKILDALG (257 aa). Residue 539 to 597 coordinates ATP; the sequence is PYYRGRAIVIKPKSTNFGIGITIIKENNRHDFFAQGIAQAFKHEATVLIENFSSGKEYR. D719, E738, and N740 together coordinate Mg(2+). Residues D719, E738, and N740 each coordinate Mn(2+).

It in the N-terminal section; belongs to the glutamate--cysteine ligase type 1 family. Type 2 subfamily. In terms of assembly, monomer. Mg(2+) is required as a cofactor. The cofactor is Mn(2+).

It carries out the reaction L-cysteine + L-glutamate + ATP = gamma-L-glutamyl-L-cysteine + ADP + phosphate + H(+). The enzyme catalyses gamma-L-glutamyl-L-cysteine + glycine + ATP = glutathione + ADP + phosphate + H(+). It functions in the pathway sulfur metabolism; glutathione biosynthesis; glutathione from L-cysteine and L-glutamate: step 1/2. Its pathway is sulfur metabolism; glutathione biosynthesis; glutathione from L-cysteine and L-glutamate: step 2/2. Its function is as follows. Synthesizes glutathione from L-glutamate and L-cysteine via gamma-L-glutamyl-L-cysteine. The polypeptide is Glutathione biosynthesis bifunctional protein GshAB (Desulfotalea psychrophila (strain LSv54 / DSM 12343)).